The sequence spans 152 residues: UPF0178 protein swp_1285 (152 aa).

The protein belongs to the UPF0178 family.

The sequence is that of UPF0178 protein swp_1285 from Shewanella piezotolerans (strain WP3 / JCM 13877).